The sequence spans 461 residues: Photosynthetic NDH subunit of subcomplex B 1, chloroplastic (461 aa).

Residues 1 to 44 constitute a chloroplast transit peptide; the sequence is MASSLPLLPKPISPFFKTPPFSTSKPLVFLNFQTRLTSRSSDVS. The disordered stretch occupies residues 66 to 90; sequence NEYGSLFADGKQDEDPRPPDNPDNP. A compositionally biased stretch (basic and acidic residues) spans 75 to 85; sequence GKQDEDPRPPD.

In terms of assembly, part of the chloroplast NDH complex, composed of a mixture of chloroplast and nucleus encoded subunits. Component of the NDH subcomplex B, at least composed of PnsB1, PnsB2, PnsB3, PnsB4 and PnsB5.

It is found in the plastid. It localises to the chloroplast thylakoid membrane. Its function is as follows. NDH shuttles electrons from NAD(P)H:plastoquinone, via FMN and iron-sulfur (Fe-S) centers, to quinones in the photosynthetic chain and possibly in a chloroplast respiratory chain. The immediate electron acceptor for the enzyme in this species is believed to be plastoquinone. Couples the redox reaction to proton translocation, and thus conserves the redox energy in a proton gradient. The sequence is that of Photosynthetic NDH subunit of subcomplex B 1, chloroplastic from Arabidopsis thaliana (Mouse-ear cress).